A 413-amino-acid polypeptide reads, in one-letter code: Multifunctional CCA protein (413 aa).

Positions 8 and 11 each coordinate ATP. Positions 8 and 11 each coordinate CTP. Mg(2+) contacts are provided by aspartate 21 and aspartate 23. Arginine 91, arginine 137, and arginine 140 together coordinate ATP. CTP is bound by residues arginine 91, arginine 137, and arginine 140. The HD domain maps to 228 to 329 (TGLHTLMTVT…VKLFDSIDAW (102 aa)).

The protein belongs to the tRNA nucleotidyltransferase/poly(A) polymerase family. Bacterial CCA-adding enzyme type 1 subfamily. As to quaternary structure, monomer. Can also form homodimers and oligomers. It depends on Mg(2+) as a cofactor. Requires Ni(2+) as cofactor.

It catalyses the reaction a tRNA precursor + 2 CTP + ATP = a tRNA with a 3' CCA end + 3 diphosphate. The enzyme catalyses a tRNA with a 3' CCA end + 2 CTP + ATP = a tRNA with a 3' CCACCA end + 3 diphosphate. Functionally, catalyzes the addition and repair of the essential 3'-terminal CCA sequence in tRNAs without using a nucleic acid template. Adds these three nucleotides in the order of C, C, and A to the tRNA nucleotide-73, using CTP and ATP as substrates and producing inorganic pyrophosphate. tRNA 3'-terminal CCA addition is required both for tRNA processing and repair. Also involved in tRNA surveillance by mediating tandem CCA addition to generate a CCACCA at the 3' terminus of unstable tRNAs. While stable tRNAs receive only 3'-terminal CCA, unstable tRNAs are marked with CCACCA and rapidly degraded. The sequence is that of Multifunctional CCA protein from Klebsiella pneumoniae (strain 342).